A 230-amino-acid chain; its full sequence is Large ribosomal subunit protein uL1 (230 aa).

Belongs to the universal ribosomal protein uL1 family. As to quaternary structure, part of the 50S ribosomal subunit.

Binds directly to 23S rRNA. The L1 stalk is quite mobile in the ribosome, and is involved in E site tRNA release. Its function is as follows. Protein L1 is also a translational repressor protein, it controls the translation of the L11 operon by binding to its mRNA. This is Large ribosomal subunit protein uL1 from Bacillus cereus (strain B4264).